Consider the following 683-residue polypeptide: DNA-directed RNA polymerase subunit beta' (683 aa).

Zn(2+) is bound by residues Cys69, Cys71, Cys87, and Cys90. The Mg(2+) site is built by Asp489, Asp491, and Asp493.

This sequence belongs to the RNA polymerase beta' chain family. RpoC1 subfamily. As to quaternary structure, in plastids the minimal PEP RNA polymerase catalytic core is composed of four subunits: alpha, beta, beta', and beta''. When a (nuclear-encoded) sigma factor is associated with the core the holoenzyme is formed, which can initiate transcription. Mg(2+) serves as cofactor. The cofactor is Zn(2+).

It localises to the plastid. The protein resides in the chloroplast. It catalyses the reaction RNA(n) + a ribonucleoside 5'-triphosphate = RNA(n+1) + diphosphate. In terms of biological role, DNA-dependent RNA polymerase catalyzes the transcription of DNA into RNA using the four ribonucleoside triphosphates as substrates. The sequence is that of DNA-directed RNA polymerase subunit beta' from Saccharum hybrid (Sugarcane).